A 310-amino-acid polypeptide reads, in one-letter code: Porphobilinogen deaminase (310 aa).

Cysteine 242 is subject to S-(dipyrrolylmethanemethyl)cysteine.

It belongs to the HMBS family. Monomer. Dipyrromethane is required as a cofactor.

The catalysed reaction is 4 porphobilinogen + H2O = hydroxymethylbilane + 4 NH4(+). Its pathway is porphyrin-containing compound metabolism; protoporphyrin-IX biosynthesis; coproporphyrinogen-III from 5-aminolevulinate: step 2/4. In terms of biological role, tetrapolymerization of the monopyrrole PBG into the hydroxymethylbilane pre-uroporphyrinogen in several discrete steps. This Shewanella oneidensis (strain ATCC 700550 / JCM 31522 / CIP 106686 / LMG 19005 / NCIMB 14063 / MR-1) protein is Porphobilinogen deaminase.